Consider the following 234-residue polypeptide: Zinc finger FYVE domain-containing protein 21 (234 aa).

The FYVE-type zinc-finger motif lies at D44–L104. Residues C50, C53, C66, C69, C74, C77, C96, and C99 each contribute to the Zn(2+) site. The interval A107–Q234 is PH-like.

As to quaternary structure, interacts with PTK2/FAK1.

The protein localises to the cell junction. It is found in the focal adhesion. The protein resides in the cytoplasmic vesicle. Its subcellular location is the endosome. Functionally, plays a role in cell adhesion, and thereby in cell motility which requires repeated formation and disassembly of focal adhesions. Regulates microtubule-induced PTK2/FAK1 dephosphorylation, an event important for focal adhesion disassembly, as well as integrin beta-1/ITGB1 cell surface expression. This is Zinc finger FYVE domain-containing protein 21 (ZFYVE21) from Homo sapiens (Human).